A 42-amino-acid chain; its full sequence is LPSDATPVLDVTGKELDPRLSYRIISIGRXALGGXVYLGKSP.

This sequence belongs to the protease inhibitor I3 (leguminous Kunitz-type inhibitor) family. In terms of tissue distribution, cortex of potato tuber.

Functionally, potent inhibitor of animal pancreatic trypsin (serine protease). The sequence is that of Serine protease inhibitor 8 from Solanum tuberosum (Potato).